Here is an 834-residue protein sequence, read N- to C-terminus: MAVVIRLLGLPFIAGPVDIRHFFKGLTIPDGGVHIIGGKVGEAFIIFATDEDARRAISRSGGFIKDSSVELFLSSKVEMQKTIEMKRTARVGRGRPGSGASGVGNVYHFSDALKEEESYSGYGSSVNRDAGFHTNGTGLDLRPRKTRPLKAENPYLFLRGLPYLVNEDDVRVFFSGLCVDGVILLKHHDGRNNGDAIVKFASCVDASGGLKCHRSFMGSRFIEVMQGSEQQWIEFGGTATEGGDTPRMRSEEHSPSRRINGRHFRKRSHSKSPRARSRSPLGFYVHLKNLSLNTNKRDLRNLFRDTDLTNDQIKFVYKDERRTRYAFVMFKNQKDYNTALGLHKTVLQYRPVLIDPVSRKEMVRIIECYEKKRPESLEKERPGRVSQKYSQEGFSGSGQKLCIYIRNLPFDVTKGEVQKFFADFSLVEDDIYLLCDDKGVGLGEALVRFKSEEQAMKAERLNRQRFLGIEVLLRLISEEQMQEFGIKSSWLSNERTQACSRSHDGDDCSCLFDLKDPSSCSFGQSESLRYHPKDLRKMGHFKHPQGYFRQSDRCSPEDFRHSPEDYRHPWEEHTSHSREEDWRLPLEDWPQEDDFRQCHEKDHRQLRSPWEEDFRRPSQEHFRRSYQEHIRRPPQEHFRRSREEDFRHVADEDFRQASDEDFRISQEDLRYPTDEDFRRVSVEDLREVPEKDLRLPKNFRSSGEEFWTPPDFRGQHPFVNFDHLQGGKFDFEKYKLENFHDGKFVPDLKFNCGSGGIIRVMISNLPFKANANEILDFFHGYKVIPDSVSIQYNEEGLPLGEAIVSMTNYNEALSAVKDLSGRPVGPRKVKLSLL.

The region spanning 154 to 229 (PYLFLRGLPY…RFIEVMQGSE (76 aa)) is the RRM 1 domain. Residues 237-277 (GTATEGGDTPRMRSEEHSPSRRINGRHFRKRSHSKSPRARS) are disordered. A compositionally biased stretch (basic and acidic residues) spans 244–255 (DTPRMRSEEHSP). Residues 259–277 (INGRHFRKRSHSKSPRARS) are compositionally biased toward basic residues. 2 RRM domains span residues 283–359 (FYVH…PVSR) and 401–478 (LCIY…LISE). Disordered stretches follow at residues 546–572 (GYFR…PWEE) and 621–643 (HFRR…RSRE). The span at 550 to 572 (QSDRCSPEDFRHSPEDYRHPWEE) shows a compositional bias: basic and acidic residues. A Phosphoserine modification is found at Ser-701. One can recognise an RRM 4 domain in the interval 758 to 834 (IRVMISNLPF…GPRKVKLSLL (77 aa)).

The protein is RNA-binding protein 12B-B (Rbm12b2) of Mus musculus (Mouse).